Consider the following 463-residue polypeptide: Sporulation-specific protein 22 (463 aa).

The signal sequence occupies residues 1–25 (MNRITRKSCLFAIIFASLFVTHALG). LRR repeat units follow at residues 127 to 147 (SPELIRIQAGNLNKIEGLFQL), 185 to 206 (IEIIKDIVISDTSLANIENFNK), 207 to 233 (VQEIDTFNINNNRFLETIHSNVKTIRG), 251 to 275 (LREVENITIRDTSLVYLPQLTKVKS), and 302 to 325 (INNVNLIKVNLENLTDIQGGLMIA). Asn-256, Asn-314, and Asn-327 each carry an N-linked (GlcNAc...) asparagine glycan. Asn-440 carries the GPI-anchor amidated asparagine lipid modification. Positions 441 to 463 (SANPSMQLDPLLFGTCLVAMLLF) are cleaved as a propeptide — removed in mature form.

It belongs to the SPS2 family.

Its subcellular location is the cell membrane. Its function is as follows. Redundant with SPS2 for the organization of the beta-glucan layer of the spore wall. This chain is Sporulation-specific protein 22 (SPS22), found in Saccharomyces cerevisiae (strain ATCC 204508 / S288c) (Baker's yeast).